The sequence spans 497 residues: Probable cytosol aminopeptidase (497 aa).

K267 and D272 together coordinate Mn(2+). K279 is an active-site residue. 3 residues coordinate Mn(2+): D290, D349, and E351. R353 is an active-site residue.

Belongs to the peptidase M17 family. It depends on Mn(2+) as a cofactor.

It localises to the cytoplasm. It carries out the reaction Release of an N-terminal amino acid, Xaa-|-Yaa-, in which Xaa is preferably Leu, but may be other amino acids including Pro although not Arg or Lys, and Yaa may be Pro. Amino acid amides and methyl esters are also readily hydrolyzed, but rates on arylamides are exceedingly low.. It catalyses the reaction Release of an N-terminal amino acid, preferentially leucine, but not glutamic or aspartic acids.. In terms of biological role, presumably involved in the processing and regular turnover of intracellular proteins. Catalyzes the removal of unsubstituted N-terminal amino acids from various peptides. The polypeptide is Probable cytosol aminopeptidase (Pseudomonas putida (strain GB-1)).